Reading from the N-terminus, the 450-residue chain is NADP-specific glutamate dehydrogenase (450 aa).

Lys-114 is an active-site residue.

Belongs to the Glu/Leu/Phe/Val dehydrogenases family. In terms of assembly, homohexamer.

It catalyses the reaction L-glutamate + NADP(+) + H2O = 2-oxoglutarate + NH4(+) + NADPH + H(+). The protein is NADP-specific glutamate dehydrogenase (gdhA) of Botryotinia fuckeliana (Noble rot fungus).